The following is a 339-amino-acid chain: Inositol 2-dehydrogenase (339 aa).

This sequence belongs to the Gfo/Idh/MocA family. As to quaternary structure, homotetramer.

It carries out the reaction myo-inositol + NAD(+) = scyllo-inosose + NADH + H(+). Its function is as follows. Involved in the oxidation of myo-inositol (MI) to 2-keto-myo-inositol (2KMI or 2-inosose). The protein is Inositol 2-dehydrogenase of Leifsonia xyli subsp. xyli (strain CTCB07).